We begin with the raw amino-acid sequence, 73 residues long: Large ribosomal subunit protein bL31 (73 aa).

This sequence belongs to the bacterial ribosomal protein bL31 family. Type A subfamily. In terms of assembly, part of the 50S ribosomal subunit.

In terms of biological role, binds the 23S rRNA. The sequence is that of Large ribosomal subunit protein bL31 from Cereibacter sphaeroides (strain ATCC 17025 / ATH 2.4.3) (Rhodobacter sphaeroides).